A 125-amino-acid polypeptide reads, in one-letter code: Phosphoribosyl-AMP cyclohydrolase (125 aa).

Residue D80 coordinates Mg(2+). C81 contacts Zn(2+). 2 residues coordinate Mg(2+): D82 and D84. Zn(2+) is bound by residues C97 and C104.

Belongs to the PRA-CH family. As to quaternary structure, homodimer. Requires Mg(2+) as cofactor. It depends on Zn(2+) as a cofactor.

The protein resides in the cytoplasm. It catalyses the reaction 1-(5-phospho-beta-D-ribosyl)-5'-AMP + H2O = 1-(5-phospho-beta-D-ribosyl)-5-[(5-phospho-beta-D-ribosylamino)methylideneamino]imidazole-4-carboxamide. The protein operates within amino-acid biosynthesis; L-histidine biosynthesis; L-histidine from 5-phospho-alpha-D-ribose 1-diphosphate: step 3/9. Functionally, catalyzes the hydrolysis of the adenine ring of phosphoribosyl-AMP. This Leifsonia xyli subsp. xyli (strain CTCB07) protein is Phosphoribosyl-AMP cyclohydrolase.